We begin with the raw amino-acid sequence, 323 residues long: Thymidylate synthase (323 aa).

DUMP-binding positions include R21 and 172–173 (RR). C192 (nucleophile) is an active-site residue. DUMP is bound by residues 214–217 (RSND), N225, and 255–257 (HVY). D217 contacts (6R)-5,10-methylene-5,6,7,8-tetrahydrofolate. A322 serves as a coordination point for (6R)-5,10-methylene-5,6,7,8-tetrahydrofolate.

It belongs to the thymidylate synthase family. Bacterial-type ThyA subfamily. Homodimer.

Its subcellular location is the cytoplasm. It catalyses the reaction dUMP + (6R)-5,10-methylene-5,6,7,8-tetrahydrofolate = 7,8-dihydrofolate + dTMP. It participates in pyrimidine metabolism; dTTP biosynthesis. Functionally, catalyzes the reductive methylation of 2'-deoxyuridine-5'-monophosphate (dUMP) to 2'-deoxythymidine-5'-monophosphate (dTMP) while utilizing 5,10-methylenetetrahydrofolate (mTHF) as the methyl donor and reductant in the reaction, yielding dihydrofolate (DHF) as a by-product. This enzymatic reaction provides an intracellular de novo source of dTMP, an essential precursor for DNA biosynthesis. This Bordetella parapertussis (strain 12822 / ATCC BAA-587 / NCTC 13253) protein is Thymidylate synthase.